A 170-amino-acid polypeptide reads, in one-letter code: MELKDYIRNIQDYPKKGILFRDITTLLQNKDAFKYAIDKMAEQISSEKIDYIVGAESRGFLIGSALAYKLNCGFIPVRKKGKLPYKTISEEYALEYGTDTLYMHEDAIKKGERVLIVDDLIATGGTALAMIKMVEKLEGIVVGSSFLIELKELNGRKEIEKYPVNVLIEY.

The protein belongs to the purine/pyrimidine phosphoribosyltransferase family. In terms of assembly, homodimer.

The protein resides in the cytoplasm. The catalysed reaction is AMP + diphosphate = 5-phospho-alpha-D-ribose 1-diphosphate + adenine. The protein operates within purine metabolism; AMP biosynthesis via salvage pathway; AMP from adenine: step 1/1. Catalyzes a salvage reaction resulting in the formation of AMP, that is energically less costly than de novo synthesis. The polypeptide is Adenine phosphoribosyltransferase (Brachyspira hyodysenteriae (strain ATCC 49526 / WA1)).